The primary structure comprises 763 residues: uncharacterized protein (763 aa).

In terms of domain architecture, TR mART core spans 380–607 (DSVLNPFNTN…YNIKVITMRL (228 aa)). A helical membrane pass occupies residues 684–700 (SYVSIYALLCPLLTNIY).

The protein resides in the membrane. This is an uncharacterized protein from Acanthamoeba polyphaga mimivirus (APMV).